The following is a 149-amino-acid chain: UPF0260 protein PFL_1499 (149 aa).

Belongs to the UPF0260 family.

In Pseudomonas fluorescens (strain ATCC BAA-477 / NRRL B-23932 / Pf-5), this protein is UPF0260 protein PFL_1499.